The sequence spans 392 residues: Ribosomal RNA large subunit methyltransferase G (392 aa).

Belongs to the methyltransferase superfamily. RlmG family.

The protein localises to the cytoplasm. It carries out the reaction guanosine(1835) in 23S rRNA + S-adenosyl-L-methionine = N(2)-methylguanosine(1835) in 23S rRNA + S-adenosyl-L-homocysteine + H(+). In terms of biological role, specifically methylates the guanine in position 1835 (m2G1835) of 23S rRNA. This chain is Ribosomal RNA large subunit methyltransferase G, found in Colwellia psychrerythraea (strain 34H / ATCC BAA-681) (Vibrio psychroerythus).